A 367-amino-acid chain; its full sequence is Serine/threonine-protein kinase Sgk2 (367 aa).

Positions 1–28 (MASSPVGVPSPQPSRANGNINLGPSANP) are disordered. Serine 10 is modified (phosphoserine). The segment covering 15–28 (RANGNINLGPSANP) has biased composition (polar residues). One can recognise a Protein kinase domain in the interval 35 to 292 (FDFLKVIGKG…FLDIKNHMFF (258 aa)). ATP-binding positions include 41-49 (IGKGNYGKV) and lysine 64. The Nuclear localization signal motif lies at 68–78 (KKSILKNKEQN). Aspartate 159 serves as the catalytic Proton acceptor. Threonine 193 is modified (phosphothreonine; by PDPK1). Positions 293 to 367 (SPINWDDLYH…AQDDDDILDS (75 aa)) constitute an AGC-kinase C-terminal domain. 2 positions are modified to phosphoserine: serine 334 and serine 356. Position 357 is a phosphotyrosine (tyrosine 357).

Belongs to the protein kinase superfamily. AGC Ser/Thr protein kinase family. In terms of processing, activated by phosphorylation on Ser-356 by an unknown kinase (may be mTORC2 but not confirmed), transforming it into a substrate for PDPK1 which then phosphorylates it on Thr-193.

The protein resides in the cytoplasm. It is found in the nucleus. It catalyses the reaction L-seryl-[protein] + ATP = O-phospho-L-seryl-[protein] + ADP + H(+). It carries out the reaction L-threonyl-[protein] + ATP = O-phospho-L-threonyl-[protein] + ADP + H(+). Two specific sites, one in the kinase domain (Thr-193) and the other in the C-terminal regulatory region (Ser-356), need to be phosphorylated for its full activation. In terms of biological role, serine/threonine-protein kinase which is involved in the regulation of a wide variety of ion channels, membrane transporters, cell growth, survival and proliferation. Up-regulates Na(+) channels: SCNN1A/ENAC, K(+) channels: KCNA3/Kv1.3, KCNE1 and KCNQ1, amino acid transporter: SLC6A19, glutamate transporter: SLC1A6/EAAT4, glutamate receptors: GRIA1/GLUR1 and GRIK2/GLUR6, Na(+)/H(+) exchanger: SLC9A3/NHE3, and the Na(+)/K(+) ATPase. In Mus musculus (Mouse), this protein is Serine/threonine-protein kinase Sgk2 (Sgk2).